The sequence spans 228 residues: UPF0758 protein NT01CX_1687 (228 aa).

In terms of domain architecture, MPN spans Ile106 to Leu228. The Zn(2+) site is built by His177, His179, and Asp190. A JAMM motif motif is present at residues His177–Asp190.

Belongs to the UPF0758 family.

This chain is UPF0758 protein NT01CX_1687, found in Clostridium novyi (strain NT).